A 1441-amino-acid chain; its full sequence is Tripeptidyl-peptidase 2 (1441 aa).

Positions 62–89 are disordered; sequence AESSERSNSSKKTTNKEQSDKSAESRMA. Residues 75 to 85 show a composition bias toward basic and acidic residues; sequence TNKEQSDKSAE. Positions 107–608 constitute a Peptidase S8 domain; sequence ETGVLNFLQK…HGLLNVEKAF (502 aa). Active-site charge relay system residues include D131, H359, and S549. A compositionally biased stretch (low complexity) spans 1139–1155; the sequence is TANGAKPKAPATPQAAT. Disordered stretches follow at residues 1139–1190 and 1255–1274; these read TANG…KANA and QKTSPPEAGESADKQKEDQK. Residue S1182 is modified to Phosphoserine. The segment covering 1265-1274 has biased composition (basic and acidic residues); the sequence is SADKQKEDQK.

This sequence belongs to the peptidase S8 family. Homooligomer; forms a complex of 6 MDa probably composed of 40 subunits. Forms a structure consisting of 2 segmented and twisted strands that form a spindle-shaped structure. Each strand is composed of 10 segments (a segment being a homodimer oriented head to head), stacking of these segments leads to the formation of a twisted single strand. 2 strands compose the fully assembled spindle.

It is found in the cytoplasm. It catalyses the reaction Release of an N-terminal tripeptide from a polypeptide.. Its activity is regulated as follows. Inhibited by phenylmethanesulfonyl fluoride (PMSF) and butabindide, but not by peptidase inhibitor pepstatin, EDTA, nor bestatin. Its function is as follows. Component of the proteolytic cascade acting downstream of the 26S proteasome in the ubiquitin-proteasome pathway. Efficiently cleaves Ala-Ala-Ala-polypeptide and Pro-Pro-Ala-polypeptide, Val-Leu-Lys-polypeptide only at high concentration. Does not cleave Ala-Phe-Pro-polypeptide nor Pro-Leu-Gly-polypeptide. This Drosophila melanogaster (Fruit fly) protein is Tripeptidyl-peptidase 2 (TppII).